The sequence spans 425 residues: 3-phosphoshikimate 1-carboxyvinyltransferase (425 aa).

The 3-phosphoshikimate site is built by lysine 20, serine 21, and arginine 25. Lysine 20 is a phosphoenolpyruvate binding site. Phosphoenolpyruvate contacts are provided by glycine 92 and arginine 120. Serine 165, glutamine 167, aspartate 312, and lysine 339 together coordinate 3-phosphoshikimate. A phosphoenolpyruvate-binding site is contributed by glutamine 167. Catalysis depends on aspartate 312, which acts as the Proton acceptor. Phosphoenolpyruvate contacts are provided by arginine 343 and arginine 385.

It belongs to the EPSP synthase family. As to quaternary structure, monomer.

It is found in the cytoplasm. The catalysed reaction is 3-phosphoshikimate + phosphoenolpyruvate = 5-O-(1-carboxyvinyl)-3-phosphoshikimate + phosphate. It participates in metabolic intermediate biosynthesis; chorismate biosynthesis; chorismate from D-erythrose 4-phosphate and phosphoenolpyruvate: step 6/7. Catalyzes the transfer of the enolpyruvyl moiety of phosphoenolpyruvate (PEP) to the 5-hydroxyl of shikimate-3-phosphate (S3P) to produce enolpyruvyl shikimate-3-phosphate and inorganic phosphate. The polypeptide is 3-phosphoshikimate 1-carboxyvinyltransferase (Alkaliphilus metalliredigens (strain QYMF)).